Consider the following 381-residue polypeptide: 1-deoxy-D-xylulose 5-phosphate reductoisomerase (381 aa).

NADPH is bound by residues Thr11, Gly12, Ser13, Ile14, Asn37, and Asn121. Lys122 contacts 1-deoxy-D-xylulose 5-phosphate. Glu123 contributes to the NADPH binding site. Asp147 contacts Mn(2+). Residues Ser148, Glu149, Ser173, and His196 each coordinate 1-deoxy-D-xylulose 5-phosphate. Glu149 serves as a coordination point for Mn(2+). Gly202 contributes to the NADPH binding site. Positions 209, 214, 215, and 218 each coordinate 1-deoxy-D-xylulose 5-phosphate. Position 218 (Glu218) interacts with Mn(2+).

Belongs to the DXR family. Requires Mg(2+) as cofactor. The cofactor is Mn(2+).

The enzyme catalyses 2-C-methyl-D-erythritol 4-phosphate + NADP(+) = 1-deoxy-D-xylulose 5-phosphate + NADPH + H(+). It functions in the pathway isoprenoid biosynthesis; isopentenyl diphosphate biosynthesis via DXP pathway; isopentenyl diphosphate from 1-deoxy-D-xylulose 5-phosphate: step 1/6. Its function is as follows. Catalyzes the NADPH-dependent rearrangement and reduction of 1-deoxy-D-xylulose-5-phosphate (DXP) to 2-C-methyl-D-erythritol 4-phosphate (MEP). This chain is 1-deoxy-D-xylulose 5-phosphate reductoisomerase, found in Ruminiclostridium cellulolyticum (strain ATCC 35319 / DSM 5812 / JCM 6584 / H10) (Clostridium cellulolyticum).